The following is a 704-amino-acid chain: Phosphatidylinositol-3,5-bisphosphate 3-phosphatase MTMR8 (704 aa).

The region spanning 126-500 is the Myotubularin phosphatase domain; the sequence is GWKLIDPISD…YNIQFWCGMY (375 aa). A 1,2-diacyl-sn-glycero-3-phospho-(1D-myo-inositol-3,5-bisphosphate) contacts are provided by Asn250, Asn275, and Ile276. A 1,2-diacyl-sn-glycero-3-phospho-(1D-myo-inositol-3-phosphate) is bound by residues Asn250, Asn275, and Ile276. Catalysis depends on Cys338, which acts as the Phosphocysteine intermediate. Ser339, Asp340, Gly341, Trp342, Asp343, Arg344, Lys380, and Arg384 together coordinate a 1,2-diacyl-sn-glycero-3-phospho-(1D-myo-inositol-3,5-bisphosphate). A 1,2-diacyl-sn-glycero-3-phospho-(1D-myo-inositol-3-phosphate) is bound by residues Ser339, Asp340, Gly341, Trp342, Asp343, and Arg344. Phosphate-binding residues include Ser339 and Asp340. Phosphate contacts are provided by Trp342, Asp343, and Arg344. An a 1,2-diacyl-sn-glycero-3-phospho-(1D-myo-inositol-3-phosphate)-binding site is contributed by Arg384. A coiled-coil region spans residues 515-541; sequence ESLLEIKKQRAMLETDVHELEKKLKVR.

The protein belongs to the protein-tyrosine phosphatase family. Non-receptor class myotubularin subfamily. Homodimer. Heterodimer with MTMR9.

It is found in the nucleus envelope. The enzyme catalyses a 1,2-diacyl-sn-glycero-3-phospho-(1D-myo-inositol-3,5-bisphosphate) + H2O = a 1,2-diacyl-sn-glycero-3-phospho-(1D-myo-inositol-5-phosphate) + phosphate. It catalyses the reaction a 1,2-diacyl-sn-glycero-3-phospho-(1D-myo-inositol-3-phosphate) + H2O = a 1,2-diacyl-sn-glycero-3-phospho-(1D-myo-inositol) + phosphate. It carries out the reaction 1,2-dioctanoyl-sn-glycero-3-phospho-(1D-myo-inositol-3,5-bisphosphate) + H2O = 1,2-dioctanoyl-sn-glycero-3-phospho-(1D-myo-inositol-5-phosphate) + phosphate. With respect to regulation, interaction with MTMR9 increases phosphatase activity. In terms of biological role, lipid phosphatase that specifically dephosphorylates the D-3 position of phosphatidylinositol 3-phosphate and phosphatidylinositol 3,5-bisphosphate, generating phosphatidylinositol and phosphatidylinositol 5-phosphate. In complex with MTMR9, negatively regulates autophagy. The sequence is that of Phosphatidylinositol-3,5-bisphosphate 3-phosphatase MTMR8 from Homo sapiens (Human).